The sequence spans 174 residues: Crossover junction endodeoxyribonuclease RuvC (174 aa).

Active-site residues include D8, E67, and D139. 3 residues coordinate Mg(2+): D8, E67, and D139.

Belongs to the RuvC family. In terms of assembly, homodimer which binds Holliday junction (HJ) DNA. The HJ becomes 2-fold symmetrical on binding to RuvC with unstacked arms; it has a different conformation from HJ DNA in complex with RuvA. In the full resolvosome a probable DNA-RuvA(4)-RuvB(12)-RuvC(2) complex forms which resolves the HJ. The cofactor is Mg(2+).

It is found in the cytoplasm. It carries out the reaction Endonucleolytic cleavage at a junction such as a reciprocal single-stranded crossover between two homologous DNA duplexes (Holliday junction).. Functionally, the RuvA-RuvB-RuvC complex processes Holliday junction (HJ) DNA during genetic recombination and DNA repair. Endonuclease that resolves HJ intermediates. Cleaves cruciform DNA by making single-stranded nicks across the HJ at symmetrical positions within the homologous arms, yielding a 5'-phosphate and a 3'-hydroxyl group; requires a central core of homology in the junction. The consensus cleavage sequence is 5'-(A/T)TT(C/G)-3'. Cleavage occurs on the 3'-side of the TT dinucleotide at the point of strand exchange. HJ branch migration catalyzed by RuvA-RuvB allows RuvC to scan DNA until it finds its consensus sequence, where it cleaves and resolves the cruciform DNA. The sequence is that of Crossover junction endodeoxyribonuclease RuvC from Pseudomonas putida (strain GB-1).